Reading from the N-terminus, the 32-residue chain is MSDIN-like toxin proprotein a (32 aa).

Residues 1 to 10 (MSDINATRLP) constitute a propeptide that is removed on maturation. A cross-link (cyclopeptide (Ile-Pro)) is located at residues 11-18 (IIGILLPP). Positions 19 to 32 (CIGDDVTLLLTRGE) are excised as a propeptide.

It belongs to the MSDIN fungal toxin family. Post-translationally, processed by the macrocyclase-peptidase enzyme POPB to yield a toxic cyclic octapeptide. POPB first removes 10 residues from the N-terminus. Conformational trapping of the remaining peptide forces the enzyme to release this intermediate rather than proceed to macrocyclization. The enzyme rebinds the remaining peptide in a different conformation and catalyzes macrocyclization of the N-terminal 8 residues.

Functionally, probable toxin that belongs to the MSDIN-like toxin family responsible for a large number of food poisoning cases and deaths. This Amanita phalloides (Death cap) protein is MSDIN-like toxin proprotein a.